Here is a 210-residue protein sequence, read N- to C-terminus: Prolactin (210 aa).

The signal sequence occupies residues Met1–Gly23. 2 disulfide bridges follow: Cys69–Cys183 and Cys200–Cys210.

The protein belongs to the somatotropin/prolactin family. As to expression, pituitary gland.

Its subcellular location is the secreted. The protein is Prolactin (prl) of Hypophthalmichthys nobilis (Bighead carp).